Reading from the N-terminus, the 321-residue chain is Probable arabinan endo-1,5-alpha-L-arabinosidase C (321 aa).

The signal sequence occupies residues 1 to 18 (MYLYTLILLFLASANVNA). The active-site Proton acceptor is aspartate 33. A glycan (N-linked (GlcNAc...) asparagine) is linked at asparagine 192. Residue glutamate 200 is the Proton donor of the active site. An N-linked (GlcNAc...) asparagine glycan is attached at asparagine 224.

This sequence belongs to the glycosyl hydrolase 43 family.

Its subcellular location is the secreted. The catalysed reaction is Endohydrolysis of (1-&gt;5)-alpha-arabinofuranosidic linkages in (1-&gt;5)-arabinans.. The protein operates within glycan metabolism; L-arabinan degradation. Its function is as follows. Endo-1,5-alpha-L-arabinanase involved in degradation of pectin. Its preferred substrate is linear 1,5-alpha-L-arabinan. The polypeptide is Probable arabinan endo-1,5-alpha-L-arabinosidase C (abnC) (Aspergillus fumigatus (strain CBS 144.89 / FGSC A1163 / CEA10) (Neosartorya fumigata)).